A 299-amino-acid polypeptide reads, in one-letter code: Dihydroorotate dehydrogenase B (NAD(+)), catalytic subunit (299 aa).

Residues Ser-19 and 43 to 44 (KS) each bind FMN. Residues Lys-43, 67-71 (NAMGL), and Asn-121 each bind substrate. Residue Asn-121 participates in FMN binding. Cys-124 serves as the catalytic Nucleophile. The FMN site is built by Lys-159 and Ile-185. 186–187 (NT) provides a ligand contact to substrate. FMN contacts are provided by residues Gly-211, 237–238 (GG), and 259–260 (GT).

It belongs to the dihydroorotate dehydrogenase family. Type 1 subfamily. Heterotetramer of 2 PyrK and 2 PyrD type B subunits. It depends on FMN as a cofactor.

It is found in the cytoplasm. It catalyses the reaction (S)-dihydroorotate + NAD(+) = orotate + NADH + H(+). It participates in pyrimidine metabolism; UMP biosynthesis via de novo pathway; orotate from (S)-dihydroorotate (NAD(+) route): step 1/1. In terms of biological role, catalyzes the conversion of dihydroorotate to orotate with NAD(+) as electron acceptor. The chain is Dihydroorotate dehydrogenase B (NAD(+)), catalytic subunit (pyrD) from Pyrococcus abyssi (strain GE5 / Orsay).